The following is a 202-amino-acid chain: MGSVDAANGSGKKPTVIFVLGGPGSGKGTQCAYIVEHYGYTHLSAGDLLRAEIKSGSENGTMIQNMIKEGKIVPSEVTIKLLQKAIQENGNDKFLIDGFPRNEENRAAFEKVTEIEPKFVLFFDCPEEEMEKRLLGRNQGREDDNIETIRKRFKVFLESSLPVIHYYEAKGKVRKINAAKPIEAVFEEVKAIFSPEAEKVEA.

G24–T29 is an ATP binding site. Residues S44–V73 are NMP. A ribonucleoside 5'-phosphate contacts are provided by residues R50, K71–V73, and G98–R101. N105 is a CMP binding site. The tract at residues G136 to D144 is LID. R137 is a binding site for ATP. A ribonucleoside 5'-phosphate is bound by residues R141 and R152. K180 is an ATP binding site.

As to quaternary structure, monomer. Requires Mg(2+) as cofactor.

It is found in the cytoplasm. The protein localises to the nucleus. It carries out the reaction CMP + ATP = CDP + ADP. It catalyses the reaction dCMP + ATP = dCDP + ADP. The catalysed reaction is UMP + ATP = UDP + ADP. Its function is as follows. Catalyzes the phosphorylation of pyrimidine nucleoside monophosphates at the expense of ATP. Plays an important role in de novo pyrimidine nucleotide biosynthesis. Has preference for UMP and CMP as phosphate acceptors. Does not act on dCMP and dUMP. This Arabidopsis thaliana (Mouse-ear cress) protein is UMP-CMP kinase 3 (UMK3).